We begin with the raw amino-acid sequence, 171 residues long: Co-chaperone protein HscB (171 aa).

One can recognise a J domain in the interval 2–74 (DYFTLFGLPA…LTRAEYLLSL (73 aa)).

Belongs to the HscB family. In terms of assembly, interacts with HscA and stimulates its ATPase activity. Interacts with IscU.

In terms of biological role, co-chaperone involved in the maturation of iron-sulfur cluster-containing proteins. Seems to help targeting proteins to be folded toward HscA. This chain is Co-chaperone protein HscB, found in Salmonella arizonae (strain ATCC BAA-731 / CDC346-86 / RSK2980).